Here is a 338-residue protein sequence, read N- to C-terminus: Nucleoid-associated protein PA14_59050 (338 aa).

The protein belongs to the YejK family.

It is found in the cytoplasm. Its subcellular location is the nucleoid. In Pseudomonas aeruginosa (strain UCBPP-PA14), this protein is Nucleoid-associated protein PA14_59050.